The following is a 362-amino-acid chain: Probable choline-phosphate cytidylyltransferase (362 aa).

Positions 1 to 37 (MGEEGIKINDTHKRRIDEVEPSEKEDNVERQTKKYNF) are enriched in basic and acidic residues. The disordered stretch occupies residues 1–79 (MGEEGIKIND…VSPVEEEPRD (79 aa)). Residues 109–117 (VFDLFHIGH) and lysine 147 each bind CTP. Residues lysine 147 and tryptophan 176 each contribute to the substrate site. CTP-binding positions include 193–194 (HD), tyrosine 198, and 221–225 (RTEGV). The tract at residues 308–362 (KNPLHGSSEPSSPGPTGFLGGINRWMQRRSSSHYDLPRVGNEIAASSSSATEENH) is disordered. 2 stretches are compositionally biased toward low complexity: residues 313–323 (GSSEPSSPGPT) and 351–362 (AASSSSATEENH). A phosphoserine mark is found at serine 315 and serine 319. At threonine 323 the chain carries Phosphothreonine. The residue at position 355 (serine 355) is a Phosphoserine.

Belongs to the cytidylyltransferase family.

Its subcellular location is the nucleus. It carries out the reaction phosphocholine + CTP + H(+) = CDP-choline + diphosphate. The sequence is that of Probable choline-phosphate cytidylyltransferase from Schizosaccharomyces pombe (strain 972 / ATCC 24843) (Fission yeast).